We begin with the raw amino-acid sequence, 354 residues long: MTALSRSEATEEGGNQQMHRKTASLNSPVSCKEKPDRVEEPPDYSLHWPEGLKGEEIKKCGREGITLNKYNQQYHKLFKDVPLEEVVLKVCSCALQRDFLLQGRLYISPNWLCFHASLFGKDIKVVIPVVSVQMIKKHKMARLLPNGLAITTNTSQKYIFVSLLSRDSVYDLLRRVCTHLQPSSKKSLSVREFSGEPESLEVLIPEMKWRKVCPSSRSLSLPDNIPCIPPSSVDSTDSFFPSRKPPMSEKSRAQVASENGGRWAWPMPGWGPACPKKMPNCSPTAKNAVYEEDELEEEPRSTGELRLWDYRLLKVFFVLICFLVMSSSYLAFRISRLEQQLCSLSWDDPVPGHR.

A compositionally biased stretch (polar residues) spans 1–29; sequence MTALSRSEATEEGGNQQMHRKTASLNSPV. The interval 1 to 46 is disordered; the sequence is MTALSRSEATEEGGNQQMHRKTASLNSPVSCKEKPDRVEEPPDYSL. Over residues 31-40 the composition is skewed to basic and acidic residues; that stretch reads CKEKPDRVEE. The GRAM domain maps to 72–139; that stretch reads QQYHKLFKDV…VSVQMIKKHK (68 aa). A helical membrane pass occupies residues 312 to 332; sequence LLKVFFVLICFLVMSSSYLAF.

The protein resides in the endoplasmic reticulum membrane. It localises to the cell membrane. Functionally, participates in the organization of endoplasmic reticulum-plasma membrane contact sites (EPCS) with pleiotropic functions including STIM1 recruitment and calcium homeostasis. Constitutive tether that co-localize with ESYT2/3 tethers at endoplasmic reticulum-plasma membrane contact sites in a phosphatidylinositol lipid-dependent manner. Pre-marks the subset of phosphtidylinositol 4,5-biphosphate (PI(4,5)P2)-enriched EPCS destined for the store operated calcium entry pathway (SOCE). The polypeptide is GRAM domain-containing protein 2A (Homo sapiens (Human)).